A 202-amino-acid polypeptide reads, in one-letter code: Small ribosomal subunit protein uS2 (202 aa).

The protein belongs to the universal ribosomal protein uS2 family.

The protein is Small ribosomal subunit protein uS2 (rps2) of Pyrococcus horikoshii (strain ATCC 700860 / DSM 12428 / JCM 9974 / NBRC 100139 / OT-3).